Reading from the N-terminus, the 288-residue chain is Pantothenate synthetase (288 aa).

30-37 (MGFLHEGH) provides a ligand contact to ATP. Histidine 37 functions as the Proton donor in the catalytic mechanism. Residue glutamine 61 coordinates (R)-pantoate. Glutamine 61 provides a ligand contact to beta-alanine. 147 to 150 (GLKD) contributes to the ATP binding site. Glutamine 153 is a binding site for (R)-pantoate. ATP is bound by residues valine 176 and 184 to 187 (KSSR).

The protein belongs to the pantothenate synthetase family. Homodimer.

It localises to the cytoplasm. It carries out the reaction (R)-pantoate + beta-alanine + ATP = (R)-pantothenate + AMP + diphosphate + H(+). It participates in cofactor biosynthesis; (R)-pantothenate biosynthesis; (R)-pantothenate from (R)-pantoate and beta-alanine: step 1/1. In terms of biological role, catalyzes the condensation of pantoate with beta-alanine in an ATP-dependent reaction via a pantoyl-adenylate intermediate. The protein is Pantothenate synthetase of Bacillus pumilus (strain SAFR-032).